The primary structure comprises 204 residues: Small ribosomal subunit protein uS3 (204 aa).

Residues 37–105 (IRSYINESFK…NVEVNVVGVK (69 aa)) enclose the KH type-2 domain.

The protein belongs to the universal ribosomal protein uS3 family. Part of the 30S ribosomal subunit. Forms a tight complex with proteins S10 and S14.

Functionally, binds the lower part of the 30S subunit head. Binds mRNA in the 70S ribosome, positioning it for translation. The sequence is that of Small ribosomal subunit protein uS3 from Wolbachia pipientis wMel.